We begin with the raw amino-acid sequence, 402 residues long: Tryptophan synthase beta chain (402 aa).

Lysine 91 carries the N6-(pyridoxal phosphate)lysine modification.

Belongs to the TrpB family. Tetramer of two alpha and two beta chains. The cofactor is pyridoxal 5'-phosphate.

It catalyses the reaction (1S,2R)-1-C-(indol-3-yl)glycerol 3-phosphate + L-serine = D-glyceraldehyde 3-phosphate + L-tryptophan + H2O. It functions in the pathway amino-acid biosynthesis; L-tryptophan biosynthesis; L-tryptophan from chorismate: step 5/5. In terms of biological role, the beta subunit is responsible for the synthesis of L-tryptophan from indole and L-serine. The protein is Tryptophan synthase beta chain (trpB) of Lactococcus lactis subsp. lactis (strain IL1403) (Streptococcus lactis).